Reading from the N-terminus, the 295-residue chain is Indole-3-glycerol phosphate synthase (295 aa).

Belongs to the TrpC family.

It carries out the reaction 1-(2-carboxyphenylamino)-1-deoxy-D-ribulose 5-phosphate + H(+) = (1S,2R)-1-C-(indol-3-yl)glycerol 3-phosphate + CO2 + H2O. It participates in amino-acid biosynthesis; L-tryptophan biosynthesis; L-tryptophan from chorismate: step 4/5. In Prochlorococcus marinus (strain MIT 9515), this protein is Indole-3-glycerol phosphate synthase.